A 210-amino-acid polypeptide reads, in one-letter code: MVSSCCGSVCSDQGCGQDLCQETCCRPSCCETTCCRTTCCRPSCCVSSCCRPQCCQSVCCQPTCSRPSCCQTTCCRTTCYRPSCCVSSCCRPQCCQPACCQPTCCRPSCCETTCCHPRCCISSCCRPSCCVSSCCKPQCCQSVCCQPNCCRPSCSISSCCRPSCCESSCCRPCCCVRPVCGRVSCHTTCYRPTCVISSCPRPLCCASSCC.

28 repeat units span residues 24–28, 29–33, 34–38, 39–43, 44–48, 49–53, 54–58, 59–63, 69–73, 74–78, 84–88, 89–93, 94–98, 99–103, 104–108, 109–113, 114–118, 119–123, 124–128, 129–133, 134–138, 139–143, 144–148, 149–153, 159–163, 164–168, 169–173, and 174–178. Residues 24–178 are 29 X 5 AA repeats of C-C-[RQVHIEK]-[SPTR]-[VSTQCRNP]; sequence CCRPSCCETT…CCRPCCCVRP (155 aa).

Belongs to the KRTAP type 4 family. In terms of assembly, interacts with hair keratins. In terms of tissue distribution, expressed in the hair follicles.

In the hair cortex, hair keratin intermediate filaments are embedded in an interfilamentous matrix, consisting of hair keratin-associated proteins (KRTAP), which are essential for the formation of a rigid and resistant hair shaft through their extensive disulfide bond cross-linking with abundant cysteine residues of hair keratins. The matrix proteins include the high-sulfur and high-glycine-tyrosine keratins. This is Keratin-associated protein 4-9 (KRTAP4-9) from Homo sapiens (Human).